A 38-amino-acid chain; its full sequence is Photosystem II reaction center protein L (38 aa).

A helical membrane pass occupies residues 17-37 (SLFWGLLLIFVLAVLFSSYFF).

This sequence belongs to the PsbL family. As to quaternary structure, PSII is composed of 1 copy each of membrane proteins PsbA, PsbB, PsbC, PsbD, PsbE, PsbF, PsbH, PsbI, PsbJ, PsbK, PsbL, PsbM, PsbT, PsbX, PsbY, PsbZ, Psb30/Ycf12, at least 3 peripheral proteins of the oxygen-evolving complex and a large number of cofactors. It forms dimeric complexes.

It is found in the plastid. Its subcellular location is the chloroplast thylakoid membrane. One of the components of the core complex of photosystem II (PSII). PSII is a light-driven water:plastoquinone oxidoreductase that uses light energy to abstract electrons from H(2)O, generating O(2) and a proton gradient subsequently used for ATP formation. It consists of a core antenna complex that captures photons, and an electron transfer chain that converts photonic excitation into a charge separation. This subunit is found at the monomer-monomer interface and is required for correct PSII assembly and/or dimerization. The chain is Photosystem II reaction center protein L from Zygnema circumcarinatum (Green alga).